Reading from the N-terminus, the 72-residue chain is Protein SlyX homolog (72 aa).

The protein belongs to the SlyX family.

In Bradyrhizobium diazoefficiens (strain JCM 10833 / BCRC 13528 / IAM 13628 / NBRC 14792 / USDA 110), this protein is Protein SlyX homolog.